Reading from the N-terminus, the 615-residue chain is DNA mismatch repair protein MutL (615 aa).

The disordered stretch occupies residues 363–397; it reads FAEPAAREPVAPRYTPAPASGSRPAAPWPNAQPGY. Residues 364 to 391 show a composition bias toward low complexity; that stretch reads AEPAAREPVAPRYTPAPASGSRPAAPWP.

Belongs to the DNA mismatch repair MutL/HexB family.

In terms of biological role, this protein is involved in the repair of mismatches in DNA. It is required for dam-dependent methyl-directed DNA mismatch repair. May act as a 'molecular matchmaker', a protein that promotes the formation of a stable complex between two or more DNA-binding proteins in an ATP-dependent manner without itself being part of a final effector complex. The protein is DNA mismatch repair protein MutL of Escherichia coli (strain K12 / MC4100 / BW2952).